Here is a 513-residue protein sequence, read N- to C-terminus: GMP synthase [glutamine-hydrolyzing] (513 aa).

Residues 9–198 (LILVLDFGSQ…VRRVCDCKGQ (190 aa)) enclose the Glutamine amidotransferase type-1 domain. Cysteine 86 (nucleophile) is an active-site residue. Residues histidine 172 and glutamate 174 contribute to the active site. The GMPS ATP-PPase domain occupies 199 to 388 (WTMENFIEIE…LGIPEHLVWR (190 aa)). 226–232 (SGGVDSS) lines the ATP pocket.

In terms of assembly, homodimer.

It carries out the reaction XMP + L-glutamine + ATP + H2O = GMP + L-glutamate + AMP + diphosphate + 2 H(+). Its pathway is purine metabolism; GMP biosynthesis; GMP from XMP (L-Gln route): step 1/1. Functionally, catalyzes the synthesis of GMP from XMP. The protein is GMP synthase [glutamine-hydrolyzing] of Staphylococcus aureus (strain Mu3 / ATCC 700698).